We begin with the raw amino-acid sequence, 335 residues long: Phosphatidylcholine-sterol acyltransferase (335 aa).

Residues 1 to 18 (MKKWFVCLLGLVALTVQA) form the signal peptide. Residue serine 34 is the Nucleophile of the active site. Catalysis depends on residues aspartate 306 and histidine 309.

This sequence belongs to the 'GDSL' lipolytic enzyme family.

The catalysed reaction is a sterol + a 1,2-diacyl-sn-glycero-3-phosphocholine = a sterol ester + a 1-acyl-sn-glycero-3-phosphocholine. Its function is as follows. Fatty acid transfer between phosphatidylcholine and cholesterol. The polypeptide is Phosphatidylcholine-sterol acyltransferase (Aeromonas hydrophila).